Consider the following 280-residue polypeptide: Phosphatidylserine decarboxylase proenzyme (280 aa).

Active-site charge relay system; for autoendoproteolytic cleavage activity residues include D88, H144, and S247. Catalysis depends on S247, which acts as the Schiff-base intermediate with substrate; via pyruvic acid; for decarboxylase activity. The residue at position 247 (S247) is a Pyruvic acid (Ser); by autocatalysis.

Belongs to the phosphatidylserine decarboxylase family. PSD-B subfamily. Prokaryotic type I sub-subfamily. In terms of assembly, heterodimer of a large membrane-associated beta subunit and a small pyruvoyl-containing alpha subunit. It depends on pyruvate as a cofactor. In terms of processing, is synthesized initially as an inactive proenzyme. Formation of the active enzyme involves a self-maturation process in which the active site pyruvoyl group is generated from an internal serine residue via an autocatalytic post-translational modification. Two non-identical subunits are generated from the proenzyme in this reaction, and the pyruvate is formed at the N-terminus of the alpha chain, which is derived from the carboxyl end of the proenzyme. The autoendoproteolytic cleavage occurs by a canonical serine protease mechanism, in which the side chain hydroxyl group of the serine supplies its oxygen atom to form the C-terminus of the beta chain, while the remainder of the serine residue undergoes an oxidative deamination to produce ammonia and the pyruvoyl prosthetic group on the alpha chain. During this reaction, the Ser that is part of the protease active site of the proenzyme becomes the pyruvoyl prosthetic group, which constitutes an essential element of the active site of the mature decarboxylase.

The protein resides in the cell membrane. It carries out the reaction a 1,2-diacyl-sn-glycero-3-phospho-L-serine + H(+) = a 1,2-diacyl-sn-glycero-3-phosphoethanolamine + CO2. It participates in phospholipid metabolism; phosphatidylethanolamine biosynthesis; phosphatidylethanolamine from CDP-diacylglycerol: step 2/2. Its function is as follows. Catalyzes the formation of phosphatidylethanolamine (PtdEtn) from phosphatidylserine (PtdSer). The polypeptide is Phosphatidylserine decarboxylase proenzyme (Stenotrophomonas maltophilia (strain R551-3)).